The following is a 145-amino-acid chain: Large ribosomal subunit protein uL24 (145 aa).

Disordered stretches follow at residues 1-21 and 122-145; these read MKFN…HFNA and KAKS…KMQE. Residue K136 forms a Glycyl lysine isopeptide (Lys-Gly) (interchain with G-Cter in SUMO2) linkage. At T139 the chain carries Phosphothreonine.

Belongs to the universal ribosomal protein uL24 family. As to quaternary structure, component of the large ribosomal subunit. Interacts with DHX33. Post-translationally, ufmylated by UFL1 in response to endoplasmic reticulum stress, promoting reticulophagy of endoplasmic reticulum sheets.

It is found in the cytoplasm. Functionally, component of the large ribosomal subunit. The ribosome is a large ribonucleoprotein complex responsible for the synthesis of proteins in the cell. This is Large ribosomal subunit protein uL24 (RPL26) from Bos taurus (Bovine).